Reading from the N-terminus, the 164-residue chain is Protein DOWNSTREAM OF FLC (164 aa).

The N-terminal stretch at 1 to 23 (MAKSFVPLIAVLCVLVLPLAAMA) is a signal peptide. 3 disulfides stabilise this stretch: Cys-36–Cys-107, Cys-39–Cys-148, and Cys-60–Cys-95.

The protein belongs to the Ole e I family.

Its subcellular location is the secreted. In terms of biological role, part of a three-gene cluster containing FLC, UFC and DFC, which is coordinately regulated in response to vernalization. Not regulated by FLX. This chain is Protein DOWNSTREAM OF FLC (DFC), found in Arabidopsis thaliana (Mouse-ear cress).